We begin with the raw amino-acid sequence, 436 residues long: AP-2 complex subunit mu-B (436 aa).

The MHD domain occupies 170–435 (RNELFLDVLE…IGRSGIYETR (266 aa)). Lys342, Lys346, and Lys355 together coordinate a 1,2-diacyl-sn-glycero-3-phospho-(1D-myo-inositol-3,4,5-trisphosphate).

It belongs to the adaptor complexes medium subunit family. Adaptor protein complex 2 (AP-2) is a heterotetramer composed of two large adaptins (alpha-type subunit and beta-type subunit), a medium adaptin (mu-type subunit) and a small adaptin (sigma-type subunit).

The protein resides in the cell membrane. The protein localises to the membrane. It localises to the coated pit. Functionally, component of the adaptor complexes which link clathrin to receptors in coated vesicles. Clathrin-associated protein complexes are believed to interact with the cytoplasmic tails of membrane proteins, leading to their selection and concentration. AP50 is a subunit of the plasma membrane adaptor. The complex binds polyphosphoinositide-containing lipids. The sequence is that of AP-2 complex subunit mu-B (ap2m1b) from Danio rerio (Zebrafish).